The primary structure comprises 84 residues: NAD(P)H-quinone oxidoreductase subunit O (84 aa).

The protein belongs to the complex I NdhO subunit family. In terms of assembly, NDH-1 can be composed of about 15 different subunits; different subcomplexes with different compositions have been identified which probably have different functions.

The protein localises to the cellular thylakoid membrane. The enzyme catalyses a plastoquinone + NADH + (n+1) H(+)(in) = a plastoquinol + NAD(+) + n H(+)(out). It catalyses the reaction a plastoquinone + NADPH + (n+1) H(+)(in) = a plastoquinol + NADP(+) + n H(+)(out). Functionally, NDH-1 shuttles electrons from an unknown electron donor, via FMN and iron-sulfur (Fe-S) centers, to quinones in the respiratory and/or the photosynthetic chain. The immediate electron acceptor for the enzyme in this species is believed to be plastoquinone. Couples the redox reaction to proton translocation, and thus conserves the redox energy in a proton gradient. Cyanobacterial NDH-1 also plays a role in inorganic carbon-concentration. This chain is NAD(P)H-quinone oxidoreductase subunit O, found in Synechococcus sp. (strain CC9605).